Consider the following 172-residue polypeptide: RNA silencing suppressor p19 (172 aa).

Residues 1 to 20 (MERAIQGNDAREQANSERWD) are compositionally biased toward basic and acidic residues. Residues 1-37 (MERAIQGNDAREQANSERWDGGSGGTTSPFKLPDESP) form a disordered region.

This sequence belongs to the tombusvirus protein p19 family. In terms of assembly, homodimer.

In terms of biological role, viral suppressor of RNA silencing which binds specifically to silencing RNAs (siRNAs). Acts as a molecular caliper to specifically select siRNAs based on the length of the duplex region of the RNA. The sequence is that of RNA silencing suppressor p19 from Tomato bushy stunt virus (strain Ja6) (TBSV).